Reading from the N-terminus, the 144-residue chain is Interleukin-9 (144 aa).

A signal peptide spans Met1–Gly18. Gln19 carries the pyrrolidone carboxylic acid modification. 4 N-linked (GlcNAc...) asparagine glycosylation sites follow: Asn50, Asn63, Asn78, and Asn114.

The protein belongs to the IL-7/IL-9 family. Interacts with IL9R. Interacts with IL2RG.

It is found in the secreted. Functionally, multifunctional cytokine secreted mainly by T-helper 2 lymphocytes and also mast cells or NKT cells that plays important roles in the immune response against parasites. Affects intestinal epithelial permeability and adaptive immunity. In addition, induces the differentiation of specific T-cell subsets such as IL-17 producing helper T-cells (TH17) and also proliferation and differentiation of mast cells. Mechanistically, exerts its biological effects through a receptor composed of IL9R subunit and a signal transducing subunit IL2RG. Receptor stimulation results in the rapid activation of JAK1 and JAK3 kinase activities leading to STAT1, STAT3 and STAT5-mediated transcriptional programs. Induction of differentiation genes seems to be mediated by STAT1 alone, while protection of cells from apoptosis depends on STAT3 and STAT5. The polypeptide is Interleukin-9 (IL9) (Homo sapiens (Human)).